A 245-amino-acid chain; its full sequence is MFSFNLLTIVSSIVNLLALAWIIKRYFLGAIIRIMNERREKIEAAMKEAEKKLQEAEDLRKQREAQLAQARDEAAKIIKEAVDTAEKMKRDITAKAEEEAEKIIVKAHEIATAERKRVLETAKKEVLAFSRLIIKEFFKRFLPVEAEELLISQFAESLDSAIANIKSDNIEEVKFISPDNVSSQLKKKIEDKLRSLLPGNWKFIFDVDPSIGLGFKLFIGEFLIDHSLDYHLSQIYETIREVENI.

The helical transmembrane segment at 3–23 (SFNLLTIVSSIVNLLALAWII) threads the bilayer.

The protein belongs to the ATPase B chain family. As to quaternary structure, F-type ATPases have 2 components, F(1) - the catalytic core - and F(0) - the membrane proton channel. F(1) has five subunits: alpha(3), beta(3), gamma(1), delta(1), epsilon(1). F(0) has three main subunits: a(1), b(2) and c(10-14). The alpha and beta chains form an alternating ring which encloses part of the gamma chain. F(1) is attached to F(0) by a central stalk formed by the gamma and epsilon chains, while a peripheral stalk is formed by the delta and b chains.

The protein resides in the cell inner membrane. Functionally, f(1)F(0) ATP synthase produces ATP from ADP in the presence of a proton or sodium gradient. F-type ATPases consist of two structural domains, F(1) containing the extramembraneous catalytic core and F(0) containing the membrane proton channel, linked together by a central stalk and a peripheral stalk. During catalysis, ATP synthesis in the catalytic domain of F(1) is coupled via a rotary mechanism of the central stalk subunits to proton translocation. Its function is as follows. Component of the F(0) channel, it forms part of the peripheral stalk, linking F(1) to F(0). This Dictyoglomus thermophilum (strain ATCC 35947 / DSM 3960 / H-6-12) protein is ATP synthase subunit b.